We begin with the raw amino-acid sequence, 199 residues long: ATP-dependent Clp protease proteolytic subunit (199 aa).

Residue Ser98 is the Nucleophile of the active site. Residue His123 is part of the active site.

The protein belongs to the peptidase S14 family. In terms of assembly, fourteen ClpP subunits assemble into 2 heptameric rings which stack back to back to give a disk-like structure with a central cavity, resembling the structure of eukaryotic proteasomes.

The protein localises to the cytoplasm. The enzyme catalyses Hydrolysis of proteins to small peptides in the presence of ATP and magnesium. alpha-casein is the usual test substrate. In the absence of ATP, only oligopeptides shorter than five residues are hydrolyzed (such as succinyl-Leu-Tyr-|-NHMec, and Leu-Tyr-Leu-|-Tyr-Trp, in which cleavage of the -Tyr-|-Leu- and -Tyr-|-Trp bonds also occurs).. Functionally, cleaves peptides in various proteins in a process that requires ATP hydrolysis. Has a chymotrypsin-like activity. Plays a major role in the degradation of misfolded proteins. The protein is ATP-dependent Clp protease proteolytic subunit of Ehrlichia chaffeensis (strain ATCC CRL-10679 / Arkansas).